A 340-amino-acid polypeptide reads, in one-letter code: Phenylalanine--tRNA ligase alpha subunit (340 aa).

Glutamate 258 provides a ligand contact to Mg(2+).

This sequence belongs to the class-II aminoacyl-tRNA synthetase family. Phe-tRNA synthetase alpha subunit type 1 subfamily. As to quaternary structure, tetramer of two alpha and two beta subunits. Mg(2+) is required as a cofactor.

The protein localises to the cytoplasm. The catalysed reaction is tRNA(Phe) + L-phenylalanine + ATP = L-phenylalanyl-tRNA(Phe) + AMP + diphosphate + H(+). The protein is Phenylalanine--tRNA ligase alpha subunit of Corynebacterium glutamicum (strain ATCC 13032 / DSM 20300 / JCM 1318 / BCRC 11384 / CCUG 27702 / LMG 3730 / NBRC 12168 / NCIMB 10025 / NRRL B-2784 / 534).